A 723-amino-acid chain; its full sequence is Catalase-peroxidase (723 aa).

The segment at residues 98 to 226 (WHSAGSYRVG…LAAVMMGLIY (129 aa)) is a cross-link (tryptophyl-tyrosyl-methioninium (Trp-Tyr) (with M-252)). Histidine 99 (proton acceptor) is an active-site residue. The segment at residues 226–252 (YVNPEGVDGNPDPLKTAKDMRVTFARM) is a cross-link (tryptophyl-tyrosyl-methioninium (Tyr-Met) (with W-98)). Histidine 267 contributes to the heme b binding site.

It belongs to the peroxidase family. Peroxidase/catalase subfamily. Homodimer or homotetramer. Requires heme b as cofactor. Formation of the three residue Trp-Tyr-Met cross-link is important for the catalase, but not the peroxidase activity of the enzyme.

The catalysed reaction is H2O2 + AH2 = A + 2 H2O. The enzyme catalyses 2 H2O2 = O2 + 2 H2O. Functionally, bifunctional enzyme with both catalase and broad-spectrum peroxidase activity. In Vibrio vulnificus (strain CMCP6), this protein is Catalase-peroxidase.